A 979-amino-acid polypeptide reads, in one-letter code: Zinc finger BED domain-containing protein 6 (979 aa).

Residues 1 to 89 form a required for nucleolar localization region; sequence MSVCTLSVPV…ILAKKFSKDL (89 aa). A BED-type 1 zinc finger spans residues 130-187; sequence AKTSIVWHFFHVDPQYTWRAICNLCEKSVSRGKPGSHLGTSTLQRHLQARHSPHWTRA. Zn(2+)-binding residues include C151, C154, H175, and H180. Residues 207–232 form a disordered region; the sequence is PSSGSNGSFEYIPTDPLDDNRMGKKH. The BED-type 2 zinc-finger motif lies at 264-321; the sequence is AKTSAVWNFFYTDPQHISRAVCNICKRSVSRGRPGSHLGTSTLQRHLQATHPIHWAVA. Residues C285, C288, H309, and H314 each contribute to the Zn(2+) site. Residues 333 to 383 form a disordered region; the sequence is DEAETERSDLLSDTLHGEKSTGSQDLTAEDLSDSDSDEPMLEVENRSESPI. Residues 337–351 are compositionally biased toward basic and acidic residues; the sequence is TERSDLLSDTLHGEK. Residues 359–373 show a composition bias toward acidic residues; sequence TAEDLSDSDSDEPML. Phosphoserine is present on S381. Residues 866–948 form an HATC (Hobo-Ac-Tam3) domain region; sequence VVDEYFKEKY…EQLMFLKMNL (83 aa).

As to expression, expressed in pancreatic islet cells (at protein level).

It is found in the nucleus. Its subcellular location is the nucleolus. It localises to the cytoplasm. Transcriptional repressor which binds to the consensus sequence 5'-GCTCGC-3', transcription regulation may be tissue-specific. Regulates the expression of target genes such as: IGF2, PGAP6/TMEM8, ENHO, and PIANP. Acts as a transcriptional repressor of growth factor IGF2, thereby negatively regulating postnatal growth of muscles and internal organs, especially in females. Negatively regulates myoblast differentiation and myoblast mitochondrial activity via its regulation of IGF2 transcription. Negatively regulates the cell cycle of myoblasts, potentially via transcriptional regulation of the E2F family of transcription factors such as: E2F1 and E2F2. Positively regulates the cell cycle and survival of pancreatic beta cells. Binds to the CDH2 gene and may directly repress CDH2 transcription. Probably by controlling CDH2 expression, regulates pancreatic beta cell adhesion, and formation of cell-to-cell junctions between pancreatic beta cells and neural crest stem cells. May also play a role in embryonic beta cell differentiation. May play a role in insulin sensitivity and glucose clearance. This chain is Zinc finger BED domain-containing protein 6, found in Homo sapiens (Human).